Consider the following 621-residue polypeptide: Methionine--tRNA ligase (621 aa).

The 'HIGH' region signature appears at 11–21 (PYANGPRHIGH). Zn(2+)-binding residues include Cys143, Cys146, Cys156, and Cys159. A 'KMSKS' region motif is present at residues 347-351 (KFSSS). Ser350 provides a ligand contact to ATP.

Belongs to the class-I aminoacyl-tRNA synthetase family. MetG type 1 subfamily. As to quaternary structure, monomer. Zn(2+) is required as a cofactor.

Its subcellular location is the cytoplasm. The catalysed reaction is tRNA(Met) + L-methionine + ATP = L-methionyl-tRNA(Met) + AMP + diphosphate. In terms of biological role, is required not only for elongation of protein synthesis but also for the initiation of all mRNA translation through initiator tRNA(fMet) aminoacylation. In Bifidobacterium longum (strain NCC 2705), this protein is Methionine--tRNA ligase.